A 27-amino-acid polypeptide reads, in one-letter code: Cupiennin-3d (27 aa).

Glu27 carries the glutamic acid 1-amide modification.

In terms of tissue distribution, expressed by the venom gland.

It is found in the secreted. The protein is Cupiennin-3d of Cupiennius salei (American wandering spider).